Consider the following 823-residue polypeptide: ATM interactor (823 aa).

Positions 28-67 (GAAAAASGPWVPPGPRLRGSRPRPAGATQQPAVPAPPAGE) are disordered. Residues 49–59 (PRPAGATQQPA) are compositionally biased toward low complexity. A C2H2-type 1 zinc finger spans residues 84–109 (ILCTVRGCGKILPNSPALNMHLVKSH). The C2H2-type 2; degenerate zinc-finger motif lies at 165-184 (HKCSKCSNSYGTEWDLKRHA). Over residues 214–225 (HEIPAEHRDPPS) the composition is skewed to basic and acidic residues. Disordered stretches follow at residues 214-234 (HEIPAEHRDPPSKKRKMENCA), 268-289 (EPSFEDSCGSNTDKQTLTTPPR), and 610-634 (RSLLSDTNPGPDTQLPSGPAQNPGI). Residues 223-442 (PPSKKRKMEN…ADSSVSSCSQ (220 aa)) are required for formation of RAD51 foci. 2 stretches are compositionally biased toward polar residues: residues 275-286 (CGSNTDKQTLTT) and 613-629 (LSDTNPGPDTQLPSGPA).

Interacts via its C-terminus with ATM. Interacts with DYNLL1; this interaction inhibits ATMIN transcriptional activity and hence may play a role in a feedback loop whereby DYNLL1 inhibits transactivation of its own promoter by ATMIN. As to expression, ubiquitously expressed in normal tissues and cancer cell lines with highest levels in placenta and skeletal muscle.

The protein localises to the nucleus. Transcription factor. Plays a crucial role in cell survival and RAD51 foci formation in response to methylating DNA damage. Involved in regulating the activity of ATM in the absence of DNA damage. May play a role in stabilizing ATM. Binds to the DYNLL1 promoter and activates its transcription. This is ATM interactor (ATMIN) from Homo sapiens (Human).